We begin with the raw amino-acid sequence, 145 residues long: Anaerobic nitrite reductase NSHB5 (145 aa).

Residues 2 to 142 (GFSETQEELV…LAAAIKEEMK (141 aa)) enclose the Globin domain. Positions 35–39 (EIAPA) match the Homodimerization motif. The heme b site is built by Ser-45, His-59, Lys-61, Arg-84, Thr-88, and His-89. Residues 96 to 108 (DAHFEVVKTALLD) carry the Homodimerization motif.

The protein belongs to the plant globin family. In terms of assembly, homodimer. Requires heme b as cofactor. Expressed in embryonic (embryos, coleoptiles and seminal roots) and vegetative (leaves and roots) organs.

It localises to the cytoplasm. Its subcellular location is the nucleus. The catalysed reaction is Fe(III)-heme b-[protein] + nitric oxide + H2O = Fe(II)-heme b-[protein] + nitrite + 2 H(+). In terms of biological role, phytoglobin that reduces nitrite to nitric oxide under anoxic conditions (e.g. during flooding or in waterlogged soil). May not function as an oxygen storage or transport protein. Has an unusually high affinity for O(2) through an hexacoordinate heme iron because of a very low dissociation constant. The polypeptide is Anaerobic nitrite reductase NSHB5 (Oryza sativa subsp. indica (Rice)).